The sequence spans 784 residues: ent-copalyl diphosphate synthase 2, chloroplastic (784 aa).

A chloroplast-targeting transit peptide spans 1–57 (MSMTLFASVTRPGLPGPTALRFPETRHLFHSVTAFAASFSPSKSSVGSSQCNATTPP). K242 is a binding site for substrate. 2 residues coordinate Mg(2+): D379 and D381. Residues 379–382 (DIDD) carry the DXDD motif motif. A substrate-binding site is contributed by K466.

The protein belongs to the terpene synthase family. Mg(2+) serves as cofactor. As to expression, present in both leaves and flowers.

The protein resides in the plastid. The protein localises to the chloroplast. It functions in the pathway plant hormone biosynthesis; gibberellin biosynthesis. It participates in secondary metabolite biosynthesis; terpenoid biosynthesis. Involved in the biosynthesis of labdane-type diterpenoid including marrubiin and other labdane-related furanoid diterpenoids with potential applications as anti-diabetics, analgesics or vasorelaxants. May be involved in the conversion of geranylgeranyl diphosphate (GGPP) to ent-copalyl diphosphate (ent-CPP) and 8-hydroxycopalyl diphosphate (LPP, labda-13-en-8-ol diphosphate). This Marrubium vulgare (White horehound) protein is ent-copalyl diphosphate synthase 2, chloroplastic.